A 121-amino-acid polypeptide reads, in one-letter code: UPF0102 protein Xfasm12_1748 (121 aa).

The protein belongs to the UPF0102 family.

The chain is UPF0102 protein Xfasm12_1748 from Xylella fastidiosa (strain M12).